We begin with the raw amino-acid sequence, 172 residues long: Protein YdeJ (172 aa).

The protein belongs to the CinA family.

Its function is as follows. Does not have nicotinamide-nucleotide (NMN) amidohydrolase activity. This is Protein YdeJ (ydeJ) from Escherichia coli (strain K12).